A 134-amino-acid chain; its full sequence is NADH-quinone oxidoreductase subunit A (134 aa).

Transmembrane regions (helical) follow at residues 14–34, 66–86, and 96–116; these read FFMF…LSWI, FYLI…LYAW, and IGFS…FYLV.

This sequence belongs to the complex I subunit 3 family. As to quaternary structure, NDH-1 is composed of 13 different subunits. Subunits NuoA, H, J, K, L, M, N constitute the membrane sector of the complex.

It localises to the cell membrane. It catalyses the reaction a quinone + NADH + 5 H(+)(in) = a quinol + NAD(+) + 4 H(+)(out). Functionally, NDH-1 shuttles electrons from NADH, via FMN and iron-sulfur (Fe-S) centers, to quinones in the respiratory chain. The immediate electron acceptor for the enzyme in this species is believed to be ubiquinone. Couples the redox reaction to proton translocation (for every two electrons transferred, four hydrogen ions are translocated across the cytoplasmic membrane), and thus conserves the redox energy in a proton gradient. This Buchnera aphidicola subsp. Acyrthosiphon pisum (strain APS) (Acyrthosiphon pisum symbiotic bacterium) protein is NADH-quinone oxidoreductase subunit A.